The chain runs to 367 residues: S-adenosylmethionine:tRNA ribosyltransferase-isomerase (367 aa).

The segment at 150 to 182 (RHGEEEESSDEAISSQNPEIATESKRTPSNDDK) is disordered. A compositionally biased stretch (basic and acidic residues) spans 171–182 (TESKRTPSNDDK).

It belongs to the QueA family. In terms of assembly, monomer.

It localises to the cytoplasm. It catalyses the reaction 7-aminomethyl-7-carbaguanosine(34) in tRNA + S-adenosyl-L-methionine = epoxyqueuosine(34) in tRNA + adenine + L-methionine + 2 H(+). The protein operates within tRNA modification; tRNA-queuosine biosynthesis. Its function is as follows. Transfers and isomerizes the ribose moiety from AdoMet to the 7-aminomethyl group of 7-deazaguanine (preQ1-tRNA) to give epoxyqueuosine (oQ-tRNA). The sequence is that of S-adenosylmethionine:tRNA ribosyltransferase-isomerase from Rickettsia felis (strain ATCC VR-1525 / URRWXCal2) (Rickettsia azadi).